A 253-amino-acid polypeptide reads, in one-letter code: MSWIPFKIGQPKKQIVSKTVERDFEREYGKLQQLEEQTKRLQKDMKKSTDADLAMSKSAVKISQDLLSNPLCEQDQDFLHMVTALDTAMKRMDAFNQEKVNQIQKTVIEPLKKFSSIFPSLNMAVKRREQALQDYGRLQAKVEKYEEKEKTGPVLAKLHQAREELRPVREDFEAKNKQLLDEMPRFYGSRLDYFQPSFESLIRAQVIYYSEMHKIFGDLTQQLDQPGHSDEQRERENETKLSELRALSIVADD.

Positions 9–232 constitute a BAR domain; it reads GQPKKQIVSK…LDQPGHSDEQ (224 aa). 2 coiled-coil regions span residues 16–57 and 120–151; these read VSKT…AMSK and SLNMAVKRREQALQDYGRLQAKVEKYEEKEKT. A disordered region spans residues 222-241; the sequence is QLDQPGHSDEQRERENETKL. A compositionally biased stretch (basic and acidic residues) spans 227-241; that stretch reads GHSDEQRERENETKL.

Its subcellular location is the cytoplasm. It is found in the cytoskeleton. Its function is as follows. Involved in cytokinesis and septation where it has a role in the localization of F-actin. This chain is Bridging integrator 3 (Bin3), found in Mus musculus (Mouse).